The sequence spans 58 residues: Large ribosomal subunit protein bL32 (58 aa).

This sequence belongs to the bacterial ribosomal protein bL32 family.

This is Large ribosomal subunit protein bL32 from Synechococcus sp. (strain WH7803).